The following is a 405-amino-acid chain: K(+)/H(+) antiporter subunit KhtU (405 aa).

12 helical membrane passes run 3 to 23 (HLVF…VIAN), 29 to 49 (IIPF…KMGI), 60 to 80 (IIEF…GLEF), 85 to 105 (LIKS…INFS), 108 to 128 (LLYG…AGVI), 153 to 173 (LILG…SVVS), 183 to 203 (VGSA…FFIA), 222 to 242 (VFII…ETIH), 268 to 288 (LVVP…GLSI), 297 to 317 (VWLA…AGMV), 332 to 352 (IGLT…LGIA), and 357 to 377 (ATLK…GPLV).

Belongs to the monovalent cation:proton antiporter 2 (CPA2) transporter (TC 2.A.37) family. In terms of assembly, the transporter is composed of the integral membrane protein KhtU and the regulatory protein KhtT.

The protein resides in the cell membrane. Potassium antiport activity requires the presence of KhtT. Activity is also modulated by KhtS. Has higher activity at alkaline pH. Its function is as follows. Potassium/proton antiporter that mediates the efflux of potassium ions from the cell. Can also mediate rubidium/proton antiport, but has no permeability for sodium or lithium ions. In the absence of KhtT, does not have antiport activity, but can catalyze potassium efflux. Involved in protection of the cell from methylglyoxal, a toxic by-product of glycolysis, via activation by S-lactoyl-BSH of the antiporter activity, leading to cytoplasmic acidification and methylglyoxal resistance. This chain is K(+)/H(+) antiporter subunit KhtU, found in Bacillus subtilis (strain 168).